The following is a 435-amino-acid chain: 5-hydroxybenzimidazole synthase (435 aa).

Residues Met-95, Tyr-124, His-163, 186 to 188 (SKG), 227 to 230 (NGLR), and Glu-266 contribute to the substrate site. His-270 provides a ligand contact to Zn(2+). Tyr-293 is a substrate binding site. A Zn(2+)-binding site is contributed by His-334. [4Fe-4S] cluster-binding residues include Cys-410, Cys-413, and Cys-417.

The protein belongs to the ThiC family. 5-hydroxybenzimidazole synthase subfamily. In terms of assembly, homodimer. It depends on [4Fe-4S] cluster as a cofactor.

It catalyses the reaction 5-amino-1-(5-phospho-beta-D-ribosyl)imidazole + AH2 + S-adenosyl-L-methionine = 5-hydroxybenzimidazole + 5'-deoxyadenosine + formate + L-methionine + A + NH4(+) + phosphate + 2 H(+). Functionally, catalyzes the conversion of aminoimidazole ribotide (AIR) to 5-hydroxybenzimidazole (5-HBI) in a radical S-adenosyl-L-methionine (SAM)-dependent reaction. Is thus involved in the anaerobic biosynthesis of the benzimidazole lower axial ligand of the cobamide produced by G.metallireducens. The protein is 5-hydroxybenzimidazole synthase of Geobacter metallireducens (strain ATCC 53774 / DSM 7210 / GS-15).